The primary structure comprises 278 residues: uncharacterized protein (278 aa).

10 helical membrane-spanning segments follow: residues Met-1 to Tyr-21, Ala-30 to Leu-50, Val-56 to Ile-76, Ile-92 to Tyr-112, Leu-116 to Gly-136, Leu-146 to Leu-166, Leu-170 to Thr-190, Gly-209 to Trp-229, Asn-230 to Leu-250, and Leu-258 to Gln-278. EamA domains follow at residues Ile-12 to Gly-136 and Phe-154 to Leu-274.

It belongs to the EamA transporter family.

It is found in the cell membrane. This is an uncharacterized protein from Archaeoglobus fulgidus (strain ATCC 49558 / DSM 4304 / JCM 9628 / NBRC 100126 / VC-16).